The sequence spans 216 residues: Golgi to ER traffic protein 1 (216 aa).

The Lumenal portion of the chain corresponds to 1–9 (MFDISSSNL). The chain crosses the membrane as a helical span at residues 10-29 (LISVLVVLFAKQLINAVGKA). Residues 30–116 (TLENIGWSAY…YISKYIGYMI (87 aa)) lie on the Cytoplasmic side of the membrane. The stretch at 54–105 (LDQKNVELAKVSKERKSISAQDQYARWTKLNRQFDKLTGEINKLKEETSASR) forms a coiled coil. A helical transmembrane segment spans residues 117–137 (LVTTTLPIWFFRVWFRKAVLF). Residues 138–161 (YFPTGVLPHYLEWFLALPFITTGG) lie on the Lumenal side of the membrane. Residues 162–178 (VGLTIWMSAVNNVVSSV) traverse the membrane as a helical segment. Over 179–216 (IFLVKFPFEKEVPFPSKEVGNEKTSINKEEVSGTPAAN) the chain is Cytoplasmic. The segment at 193 to 216 (PSKEVGNEKTSINKEEVSGTPAAN) is disordered. Positions 197-209 (VGNEKTSINKEEV) are enriched in basic and acidic residues.

This sequence belongs to the WRB/GET1 family. In terms of assembly, component of the Golgi to ER traffic (GET) complex, which is composed of GET1, GET2 and GET3. Within the complex, GET1 and GET2 form a heterotetramer which is stabilized by phosphatidylinositol binding and which binds to the GET3 homodimer.

Its subcellular location is the endoplasmic reticulum membrane. The protein resides in the golgi apparatus membrane. Required for the post-translational delivery of tail-anchored (TA) proteins to the endoplasmic reticulum. Together with GET2, acts as a membrane receptor for soluble GET3, which recognizes and selectively binds the transmembrane domain of TA proteins in the cytosol. The GET complex cooperates with the HDEL receptor ERD2 to mediate the ATP-dependent retrieval of resident ER proteins that contain a C-terminal H-D-E-L retention signal from the Golgi to the ER. In Debaryomyces hansenii (strain ATCC 36239 / CBS 767 / BCRC 21394 / JCM 1990 / NBRC 0083 / IGC 2968) (Yeast), this protein is Golgi to ER traffic protein 1.